Here is a 174-residue protein sequence, read N- to C-terminus: Large ribosomal subunit protein uL10 (174 aa).

The protein belongs to the universal ribosomal protein uL10 family. In terms of assembly, part of the ribosomal stalk of the 50S ribosomal subunit. The N-terminus interacts with L11 and the large rRNA to form the base of the stalk. The C-terminus forms an elongated spine to which L12 dimers bind in a sequential fashion forming a multimeric L10(L12)X complex.

In terms of biological role, forms part of the ribosomal stalk, playing a central role in the interaction of the ribosome with GTP-bound translation factors. The protein is Large ribosomal subunit protein uL10 of Bordetella bronchiseptica (strain ATCC BAA-588 / NCTC 13252 / RB50) (Alcaligenes bronchisepticus).